The following is a 174-amino-acid chain: uncharacterized protein (174 aa).

The signal sequence occupies residues 1–31; the sequence is MCCVYRMNRPASGLTVVFCGKLSGKPGPKSA. Positions 39-59 are disordered; the sequence is KSGADDGGENPRFFSAGPRTE.

This is an uncharacterized protein from Escherichia coli (strain K12).